A 29-amino-acid chain; its full sequence is GVPICGETCTLGTCYTAGCSCSWPVCTRN.

The segment at residues 1 to 29 (GVPICGETCTLGTCYTAGCSCSWPVCTRN) is a cross-link (cyclopeptide (Gly-Asn)). Intrachain disulfides connect C5–C19, C9–C21, and C14–C26.

This is a cyclic peptide.

In terms of biological role, probably participates in a plant defense mechanism. Has cytotoxic activity against a variety of drug-resistant and drug-sensitive human tumor cell lines. The protein is Varv peptide F of Viola arvensis (European field pansy).